We begin with the raw amino-acid sequence, 218 residues long: Small ribosomal subunit protein uS3 (218 aa).

In terms of domain architecture, KH type-2 spans 38–106; sequence IRTFLKKKLY…KLVVDIKEVK (69 aa).

It belongs to the universal ribosomal protein uS3 family. As to quaternary structure, part of the 30S ribosomal subunit. Forms a tight complex with proteins S10 and S14.

Functionally, binds the lower part of the 30S subunit head. Binds mRNA in the 70S ribosome, positioning it for translation. The sequence is that of Small ribosomal subunit protein uS3 from Agathobacter rectalis (strain ATCC 33656 / DSM 3377 / JCM 17463 / KCTC 5835 / VPI 0990) (Eubacterium rectale).